Here is a 321-residue protein sequence, read N- to C-terminus: Lipoyl synthase (321 aa).

Residues Cys-68, Cys-73, Cys-79, Cys-94, Cys-98, Cys-101, and Ser-308 each contribute to the [4Fe-4S] cluster site. One can recognise a Radical SAM core domain in the interval 80–297 (FNHGTATFMI…KAEAMAMGFT (218 aa)).

It belongs to the radical SAM superfamily. Lipoyl synthase family. The cofactor is [4Fe-4S] cluster.

It is found in the cytoplasm. It catalyses the reaction [[Fe-S] cluster scaffold protein carrying a second [4Fe-4S](2+) cluster] + N(6)-octanoyl-L-lysyl-[protein] + 2 oxidized [2Fe-2S]-[ferredoxin] + 2 S-adenosyl-L-methionine + 4 H(+) = [[Fe-S] cluster scaffold protein] + N(6)-[(R)-dihydrolipoyl]-L-lysyl-[protein] + 4 Fe(3+) + 2 hydrogen sulfide + 2 5'-deoxyadenosine + 2 L-methionine + 2 reduced [2Fe-2S]-[ferredoxin]. The protein operates within protein modification; protein lipoylation via endogenous pathway; protein N(6)-(lipoyl)lysine from octanoyl-[acyl-carrier-protein]: step 2/2. Its function is as follows. Catalyzes the radical-mediated insertion of two sulfur atoms into the C-6 and C-8 positions of the octanoyl moiety bound to the lipoyl domains of lipoate-dependent enzymes, thereby converting the octanoylated domains into lipoylated derivatives. This chain is Lipoyl synthase, found in Pectobacterium atrosepticum (strain SCRI 1043 / ATCC BAA-672) (Erwinia carotovora subsp. atroseptica).